A 492-amino-acid chain; its full sequence is MVVSKSSPLIFERSREGRYAYSLPQSDIKTDSVESILDDKFIRKNKAEFPEVAELDLVRHYTELSNKNFGVDSGFYPLGSCTMKYNPKINEKVARIPGFAESHPLQEEGQVQGSLEIVYSLQEELKEITGMDEVTLQPAAGAHGEWTALMIFKAYHLDNGEGHRDEVIVPDSAHGTNPASASFAGFKAVTVKSNERGEVDIEDLKRVVNENTAAIMLTNPNTLGIFEKNIMEIREIVHEAGGLLYYDGANLNAIMDKVRPGDMGFDAVHLNLHKTFTGPHGGGGPGSGPVGVKKELASYLPKPMVIKDGDTFKYDNDIKNSIGRVKPFYGNFGIYLRAYTYIRTMGAEGLREVSEAAVLNANYIKASLKDHYEIPYEQYCKHEFVLSGSKQKEHGVRTLDMAKRLLDFGVHPPTIYFPLNVEEGMMIEPTETESKETLDYFIDAMIQIAEEAKNDPDKVLEAPHSTIIDRLDETTAARKPVLKFDNLHEEKE.

Position 274 is an N6-(pyridoxal phosphate)lysine (lysine 274).

Belongs to the GcvP family. C-terminal subunit subfamily. The glycine cleavage system is composed of four proteins: P, T, L and H. In this organism, the P 'protein' is a heterodimer of two subunits. Requires pyridoxal 5'-phosphate as cofactor.

It carries out the reaction N(6)-[(R)-lipoyl]-L-lysyl-[glycine-cleavage complex H protein] + glycine + H(+) = N(6)-[(R)-S(8)-aminomethyldihydrolipoyl]-L-lysyl-[glycine-cleavage complex H protein] + CO2. The glycine cleavage system catalyzes the degradation of glycine. The P protein binds the alpha-amino group of glycine through its pyridoxal phosphate cofactor; CO(2) is released and the remaining methylamine moiety is then transferred to the lipoamide cofactor of the H protein. The sequence is that of Probable glycine dehydrogenase (decarboxylating) subunit 2 from Staphylococcus haemolyticus (strain JCSC1435).